A 212-amino-acid polypeptide reads, in one-letter code: uncharacterized protein (212 aa).

Positions 53, 74, and 97 each coordinate S-adenosyl-L-methionine.

This sequence belongs to the methyltransferase superfamily. YrrT family.

In terms of biological role, could be a S-adenosyl-L-methionine-dependent methyltransferase. This is an uncharacterized protein from Bacillus thuringiensis (strain Al Hakam).